A 379-amino-acid polypeptide reads, in one-letter code: Cytochrome b (379 aa).

The next 4 helical transmembrane spans lie at 33–53 (FGSL…FLAM), 77–98 (WLIR…SIHA), 113–133 (WNIG…GYVL), and 178–198 (FFAF…VHLL). Heme b is bound by residues histidine 83 and histidine 97. The heme b site is built by histidine 182 and histidine 196. Histidine 201 contacts a ubiquinone. Transmembrane regions (helical) follow at residues 226-246 (IKDL…ALFF), 288-308 (LGGV…PLLN), 320-340 (ITQT…WIGG), and 347-367 (FTMI…ILMP).

This sequence belongs to the cytochrome b family. In terms of assembly, the cytochrome bc1 complex contains 11 subunits: 3 respiratory subunits (MT-CYB, CYC1 and UQCRFS1), 2 core proteins (UQCRC1 and UQCRC2) and 6 low-molecular weight proteins (UQCRH/QCR6, UQCRB/QCR7, UQCRQ/QCR8, UQCR10/QCR9, UQCR11/QCR10 and a cleavage product of UQCRFS1). This cytochrome bc1 complex then forms a dimer. The cofactor is heme b.

It is found in the mitochondrion inner membrane. In terms of biological role, component of the ubiquinol-cytochrome c reductase complex (complex III or cytochrome b-c1 complex) that is part of the mitochondrial respiratory chain. The b-c1 complex mediates electron transfer from ubiquinol to cytochrome c. Contributes to the generation of a proton gradient across the mitochondrial membrane that is then used for ATP synthesis. The protein is Cytochrome b (MT-CYB) of Thaptomys nigrita (Blackish grass mouse).